We begin with the raw amino-acid sequence, 269 residues long: Chromophore lyase CRL, chloroplastic (269 aa).

A helical transmembrane segment spans residues 19–36 (ARGLVVKTLVLIGGALLI).

It belongs to the CpcT/CpeT biliprotein lyase family. As to expression, mostly expressed in shoot apices, to a lower extent, in leaves, inflorescence stems, buds and cotyledons, and, at low levels, in roots and siliques.

Its subcellular location is the plastid. It localises to the chloroplast outer membrane. In terms of biological role, covalently attaches a chromophore to Cys residue(s) of phycobiliproteins. Required for plastid division, and involved in cell differentiation and regulation of the cell division plane. Maintenance of plastid homeostasis controls plant preconditioning to stress and stress acclimation. Confers sensitivity to cabbage leaf curl virus (CaLCuV), probably by supporting viral movement. The sequence is that of Chromophore lyase CRL, chloroplastic (CRL) from Arabidopsis thaliana (Mouse-ear cress).